The sequence spans 499 residues: Probable cytosol aminopeptidase (499 aa).

Mn(2+) is bound by residues Lys-269 and Asp-274. Lys-281 is a catalytic residue. Residues Asp-292, Asp-351, and Glu-353 each contribute to the Mn(2+) site. The active site involves Arg-355.

This sequence belongs to the peptidase M17 family. It depends on Mn(2+) as a cofactor.

Its subcellular location is the cytoplasm. The catalysed reaction is Release of an N-terminal amino acid, Xaa-|-Yaa-, in which Xaa is preferably Leu, but may be other amino acids including Pro although not Arg or Lys, and Yaa may be Pro. Amino acid amides and methyl esters are also readily hydrolyzed, but rates on arylamides are exceedingly low.. The enzyme catalyses Release of an N-terminal amino acid, preferentially leucine, but not glutamic or aspartic acids.. Presumably involved in the processing and regular turnover of intracellular proteins. Catalyzes the removal of unsubstituted N-terminal amino acids from various peptides. The chain is Probable cytosol aminopeptidase from Haemophilus ducreyi (strain 35000HP / ATCC 700724).